Reading from the N-terminus, the 216-residue chain is 3-keto-L-gulonate-6-phosphate decarboxylase UlaD (216 aa).

A substrate-binding site is contributed by Asp-11. Mg(2+)-binding residues include Glu-33 and Asp-62. Arg-192 is a binding site for substrate.

It belongs to the HPS/KGPDC family. KGPDC subfamily. As to quaternary structure, homodimer. The cofactor is Mg(2+).

It carries out the reaction 3-dehydro-L-gulonate 6-phosphate + H(+) = L-xylulose 5-phosphate + CO2. It functions in the pathway cofactor degradation; L-ascorbate degradation; D-xylulose 5-phosphate from L-ascorbate: step 2/4. Catalyzes the decarboxylation of 3-keto-L-gulonate-6-P into L-xylulose-5-P. Is involved in the anaerobic L-ascorbate utilization. The polypeptide is 3-keto-L-gulonate-6-phosphate decarboxylase UlaD (Shigella boydii serotype 18 (strain CDC 3083-94 / BS512)).